A 339-amino-acid polypeptide reads, in one-letter code: Fructose-1,6-bisphosphatase, cytosolic (339 aa).

Mg(2+) is bound by residues glutamate 71, glutamate 100, aspartate 121, leucine 123, and aspartate 124. Substrate contacts are provided by residues 124 to 127 (DGSS), asparagine 215, tyrosine 247, tyrosine 267, and lysine 277. Glutamate 283 provides a ligand contact to Mg(2+).

Belongs to the FBPase class 1 family. It depends on Mg(2+) as a cofactor.

It is found in the cytoplasm. The catalysed reaction is beta-D-fructose 1,6-bisphosphate + H2O = beta-D-fructose 6-phosphate + phosphate. The polypeptide is Fructose-1,6-bisphosphatase, cytosolic (Oryza sativa subsp. indica (Rice)).